The following is a 188-amino-acid chain: dCTP deaminase (188 aa).

DCTP contacts are provided by residues 111 to 116 (KSTYAR), 135 to 137 (VLE), glutamine 156, tyrosine 170, and glutamine 180. Glutamate 137 acts as the Proton donor/acceptor in catalysis.

Belongs to the dCTP deaminase family. In terms of assembly, homotrimer.

The enzyme catalyses dCTP + H2O + H(+) = dUTP + NH4(+). It functions in the pathway pyrimidine metabolism; dUMP biosynthesis; dUMP from dCTP (dUTP route): step 1/2. In terms of biological role, catalyzes the deamination of dCTP to dUTP. The chain is dCTP deaminase from Protochlamydia amoebophila (strain UWE25).